The primary structure comprises 325 residues: MRKPKITVIGGGTGSPVILKSLREKDVEIAAIVTVADDGGSSGELRKNMQQLTPPGDLRNVLVAMSDMPKFYEKVFQYRFSEDAGAFAGHPLGNLIIAGLSEMQGSTYNAMQLLSKFFHTTGKIYPSSDHPLTLHAVFQDGTEVAGESHIVDHRGIIDNVYVTNALNDDTPLASRRVVQTILESDMIVLGPGSLFTSILPNIVIKEIGRALLETKAEIAYVCNIMTQRGETEHFTDSDHVEVLHRHLGRPFIDTVLVNIEKVPQEYMNSNRFDEYLVQVEHDFVGLCKQVSRVISSNFLRLENGGAFHDGDLIVDELMRIIQVKK.

It belongs to the gluconeogenesis factor family.

It is found in the cytoplasm. In terms of biological role, required for morphogenesis under gluconeogenic growth conditions. This chain is Putative gluconeogenesis factor, found in Streptococcus pneumoniae serotype 4 (strain ATCC BAA-334 / TIGR4).